We begin with the raw amino-acid sequence, 135 residues long: uncharacterized protein (135 aa).

Residues 4 to 129 (SIVHIALVVN…YGNLWDLLQL (126 aa)) form the VOC domain.

The protein to B.subtilis YwkD.

This is an uncharacterized protein from Shewanella frigidimarina (strain NCIMB 400).